Reading from the N-terminus, the 403-residue chain is Presqualene diphosphate synthase (403 aa).

3 residues coordinate Mg(2+): Asp-84, Glu-87, and Asp-88.

This sequence belongs to the phytoene/squalene synthase family. Requires Mg(2+) as cofactor.

It catalyses the reaction 2 (2E,6E)-farnesyl diphosphate = presqualene diphosphate + diphosphate. Its function is as follows. Catalyzes the biosynthesis of presqualene diphosphate (PSPP). Works in combination with SSL-2 or SSL-3 to produce respectively squalene or botryococcene. In most other species, farnesyl diphosphate (FPP) is converted into squalene in a two-step reaction by a single enzyme. The chain is Presqualene diphosphate synthase (SSL-1) from Botryococcus braunii (Green alga).